The chain runs to 84 residues: Keratin-associated protein 19-4 (84 aa).

The protein belongs to the KRTAP type 19 family. Interacts with hair keratins.

In terms of biological role, in the hair cortex, hair keratin intermediate filaments are embedded in an interfilamentous matrix, consisting of hair keratin-associated proteins (KRTAP), which are essential for the formation of a rigid and resistant hair shaft through their extensive disulfide bond cross-linking with abundant cysteine residues of hair keratins. The matrix proteins include the high-sulfur and high-glycine-tyrosine keratins. The polypeptide is Keratin-associated protein 19-4 (KRTAP19-4) (Homo sapiens (Human)).